The sequence spans 380 residues: 1-deoxy-D-xylulose 5-phosphate reductoisomerase (380 aa).

6 residues coordinate NADPH: threonine 10, glycine 11, serine 12, isoleucine 13, glycine 35, and asparagine 121. Lysine 122 provides a ligand contact to 1-deoxy-D-xylulose 5-phosphate. Glutamate 123 lines the NADPH pocket. Aspartate 147 provides a ligand contact to Mn(2+). Residues serine 148, glutamate 149, serine 173, and histidine 196 each contribute to the 1-deoxy-D-xylulose 5-phosphate site. Glutamate 149 serves as a coordination point for Mn(2+). Glycine 202 lines the NADPH pocket. Residues serine 209, asparagine 214, lysine 215, and glutamate 218 each contribute to the 1-deoxy-D-xylulose 5-phosphate site. Residue glutamate 218 coordinates Mn(2+).

It belongs to the DXR family. The cofactor is Mg(2+). Requires Mn(2+) as cofactor.

The enzyme catalyses 2-C-methyl-D-erythritol 4-phosphate + NADP(+) = 1-deoxy-D-xylulose 5-phosphate + NADPH + H(+). The protein operates within isoprenoid biosynthesis; isopentenyl diphosphate biosynthesis via DXP pathway; isopentenyl diphosphate from 1-deoxy-D-xylulose 5-phosphate: step 1/6. Functionally, catalyzes the NADPH-dependent rearrangement and reduction of 1-deoxy-D-xylulose-5-phosphate (DXP) to 2-C-methyl-D-erythritol 4-phosphate (MEP). In Lachnospira eligens (strain ATCC 27750 / DSM 3376 / VPI C15-48 / C15-B4) (Eubacterium eligens), this protein is 1-deoxy-D-xylulose 5-phosphate reductoisomerase.